Here is a 122-residue protein sequence, read N- to C-terminus: uncharacterized protein (122 aa).

Its subcellular location is the mitochondrion. This is an uncharacterized protein from Arabidopsis thaliana (Mouse-ear cress).